Here is a 1021-residue protein sequence, read N- to C-terminus: Receptor-like protein EIX2 (1021 aa).

The signal sequence occupies residues 1–24 (MGKRTNPRHFLVTWSLLLLETAFG). The tract at residues 25–109 (LTSREVNKTL…PILTGKVSPS (85 aa)) is N-cap. Over 25–963 (LTSREVNKTL…DDDDEFSSLE (939 aa)) the chain is Extracellular. N-linked (GlcNAc...) asparagine glycosylation occurs at N31. LRR repeat units follow at residues 113–136 (LEYL…RFIG), 138–161 (LKRL…QFQN), 162–184 (LTSL…VWLS), 186–211 (LSSL…ITKV), 214–237 (LKEL…VANS), and 239–262 (LISL…SWLF). N145 and N161 each carry an N-linked (GlcNAc...) asparagine glycan. A glycan (N-linked (GlcNAc...) asparagine) is linked at N236. N-linked (GlcNAc...) asparagine glycosylation occurs at N263. LRR repeat units lie at residues 265 to 288 (STSL…RFGS), 290 to 313 (MYLE…SFGN), 314 to 337 (LTRL…LFLR), 342 to 365 (RKSL…VTRF), 366 to 388 (SSLK…RVGQ), 389 to 412 (VSSL…LALF), 413 to 436 (PSLR…IGKL), 437 to 459 (SQLR…MGQL), 461 to 483 (NLER…HFSN), 484 to 507 (LSSL…DWVP), 509 to 532 (FQLQ…LQTQ), 533 to 555 (NNYT…WFSN), 557 to 581 (PPEL…IVSK), and 583 to 607 (DYMI…NIQI). An N-linked (GlcNAc...) asparagine glycan is attached at N313. N483 carries an N-linked (GlcNAc...) asparagine glycan. N-linked (GlcNAc...) asparagine glycosylation is found at N534, N544, N564, and N593. Residues 608 to 626 (FYLHKNHFSGSISSICRNT) form an LRR 21; degenerate repeat. 6 LRR repeats span residues 627-651 (IGAA…WMNM), 652-675 (SNLA…LGSL), 677-698 (NLEA…FSQC), 699-722 (QLLQ…IGTD), 723-747 (LLQL…ICQL), and 749-773 (FLQI…NFTI). N650 and N663 each carry an N-linked (GlcNAc...) asparagine glycan. Residues N770 and N778 are each glycosylated (N-linked (GlcNAc...) asparagine). LRR repeat units follow at residues 818 to 842 (LLYL…IAEM), 843 to 866 (RGLR…IGQM), 867 to 890 (KLLE…LSNL), and 892 to 913 (FLSV…STQL). 3 N-linked (GlcNAc...) asparagine glycosylation sites follow: N849, N856, and N889. The interval 914–963 (QSFDRSSYSGNAQLCGPPLEECPGYAPPIDRGSNTNPQEHDDDDEFSSLE) is C-cap/acidic domain. A helical transmembrane segment spans residues 964–984 (FYVSMVLGFFVTFWGILGCLI). The Cytoplasmic portion of the chain corresponds to 985 to 1021 (VNRSWRNAYFTFLTDMKSWLHMTSRVCFARLKGKLRN).

The protein belongs to the RLP family. In terms of assembly, interacts with EIX elicitor protein.

The protein resides in the cell membrane. Involved in plant defense. Confers resistance to the fungal pathogen T.viride through recognition of the EIX elicitor protein. The polypeptide is Receptor-like protein EIX2 (Solanum lycopersicum (Tomato)).